The sequence spans 594 residues: UvrABC system protein C (594 aa).

The GIY-YIG domain maps to 14–91; that stretch reads DSPGCYLHKD…IQENMPKYNI (78 aa). The 36-residue stretch at 196 to 231 folds into the UVR domain; that stretch reads DKIIDDLRSKMLEASHNQEFERAAEYRDLISGIATM.

It belongs to the UvrC family. In terms of assembly, interacts with UvrB in an incision complex.

Its subcellular location is the cytoplasm. In terms of biological role, the UvrABC repair system catalyzes the recognition and processing of DNA lesions. UvrC both incises the 5' and 3' sides of the lesion. The N-terminal half is responsible for the 3' incision and the C-terminal half is responsible for the 5' incision. This is UvrABC system protein C from Streptococcus equi subsp. zooepidemicus (strain H70).